The primary structure comprises 65 residues: Large ribosomal subunit protein bL35 (65 aa).

A disordered region spans residues 1–28 (MPKLKTRKAAARRFKATGSGKIKRRKAF).

It belongs to the bacterial ribosomal protein bL35 family.

The polypeptide is Large ribosomal subunit protein bL35 (Trichodesmium erythraeum (strain IMS101)).